We begin with the raw amino-acid sequence, 353 residues long: Protein-arginine kinase (353 aa).

One can recognise a Phosphagen kinase C-terminal domain in the interval 24-256 (IVLSSRIRLA…RTVIDTEEQA (233 aa)). Residues 27-31 (SSRIR), His-93, Arg-127, 178-182 (RASVM), and 209-214 (RGLYGE) contribute to the ATP site. The RDXXRA motif of the pArg binding pocket involved in allosteric regulation signature appears at 339 to 344 (RDVRRA).

Belongs to the ATP:guanido phosphotransferase family.

The enzyme catalyses L-arginyl-[protein] + ATP = N(omega)-phospho-L-arginyl-[protein] + ADP + H(+). Appears to be allosterically activated by the binding of pArg-containing polypeptides to the pArg-binding pocket localized in the C-terminal domain of McsB. In terms of biological role, catalyzes the specific phosphorylation of arginine residues in proteins. This is Protein-arginine kinase from Symbiobacterium thermophilum (strain DSM 24528 / JCM 14929 / IAM 14863 / T).